The primary structure comprises 352 residues: Phosphoribosylformylglycinamidine cyclo-ligase (352 aa).

The protein belongs to the AIR synthase family.

The protein localises to the cytoplasm. It carries out the reaction 2-formamido-N(1)-(5-O-phospho-beta-D-ribosyl)acetamidine + ATP = 5-amino-1-(5-phospho-beta-D-ribosyl)imidazole + ADP + phosphate + H(+). Its pathway is purine metabolism; IMP biosynthesis via de novo pathway; 5-amino-1-(5-phospho-D-ribosyl)imidazole from N(2)-formyl-N(1)-(5-phospho-D-ribosyl)glycinamide: step 2/2. The chain is Phosphoribosylformylglycinamidine cyclo-ligase from Saccharophagus degradans (strain 2-40 / ATCC 43961 / DSM 17024).